Here is a 360-residue protein sequence, read N- to C-terminus: Endolytic peptidoglycan transglycosylase RlpA (360 aa).

The signal sequence occupies residues 1–17 (MRKEWLWVGIASVLLSA). A lipid anchor (N-palmitoyl cysteine) is attached at C18. C18 is lipidated: S-diacylglycerol cysteine. One can recognise an SPOR domain in the interval 283-359 (SAISGGYVVQ…AQQQSFIVAA (77 aa)).

This sequence belongs to the RlpA family.

The protein localises to the cell membrane. Its function is as follows. Lytic transglycosylase with a strong preference for naked glycan strands that lack stem peptides. The chain is Endolytic peptidoglycan transglycosylase RlpA from Yersinia pestis.